A 376-amino-acid chain; its full sequence is MKLESDHVIATSDSSDYTSEPTANKLSKRRKKVNYWEKFCSWVTSTENRLYVGWFGVLMIPCVLTAATVFIIAIIAAPPVDMDGIGVPISGSILSGNNIITAAVVPTSAAIGLHFYPIWEAASIDEWLYNGGPYQLIVLHFLIGIIAYQDREWELSYRLGMRPWISLAFTAPVAASVSVLLIYPVGQGSLSAGMPLGISGTFHFMLQFQADHNILMSPLHQLGVIGVLGGAFAAAMHGSLVTSTLIRSHNHSESESINKGYKLGQQHPTYNFRSAQVYLWHLIWQRVSFPNSRKLHFFLAALPVAGIWSAALGVDIAAFDFDYLQFHQPELKSQGQIIHTWADTIDWASLGIKVLDERHIYDFPENLTAGEVVPWK.

A disordered region spans residues 1–22 (MKLESDHVIATSDSSDYTSEPT). The segment covering 11-22 (TSDSSDYTSEPT) has biased composition (polar residues). Transmembrane regions (helical) follow at residues 51–68 (YVGW…TAAT), 140–155 (HFLI…EWEL), 164–178 (WISL…ASVS), 219–240 (LHQL…HGSL), and 298–312 (FLAA…SAAL). His140 contributes to the a chlorophyll binding site. His220 is a binding site for a chlorophyll.

This sequence belongs to the reaction center PufL/M/PsbA/D family. As to quaternary structure, homodimer.

The protein localises to the cellular thylakoid membrane. In terms of biological role, synthesizes chlorophyll f or chlorophyllide f (Chl f, 2-formyl chlorophyll a), probably by oxidation of chlorophyll a or chlorophyllide a and reduction of plastoquinone. The reaction is probably light-dependent. Chl f absorbs far red light (FRL, 707 nm in 100% methanol), and is synthesized when cells are grown in FRL, where it provides the advantage of extending the spectral range of harvested light in terrestrial cyanobacteria. When ectopically expressed in Synechococcus PCC 7002 (which does not grow in FRL and does not make Chl f) produces Chl f (0.059% of total chlorophyll). The protein is Light-dependent chlorophyll f synthase of Chlorogloeopsis fritschii (strain PCC 9212).